The chain runs to 463 residues: Serine/threonine-protein kinase sgk-1 (463 aa).

The 258-residue stretch at 135–392 (FDYLTTIGKG…FRDIRDHPFF (258 aa)) folds into the Protein kinase domain. Residues 141–149 (IGKGSFGRV) and lysine 164 each bind ATP. Catalysis depends on aspartate 259, which acts as the Proton acceptor. The AGC-kinase C-terminal domain maps to 393 to 463 (LPVDWDKLLN…TFVDTNRVLV (71 aa)).

It belongs to the protein kinase superfamily. AGC Ser/Thr protein kinase family. In terms of assembly, interacts with pdk-1, akt-1, akt-2 and daf-16. Part of a complex containing sgk-1, akt-1 and akt-2. Interacts with let-92 phosphatase regulatory subunit pptr-1. It depends on Mg(2+) as a cofactor. Expressed in late embryos just before hatching. At postembryonic stages, expressed in sensory and motor neurons and in the intestine. Highly expressed in the intestine and head and tail neurons.

Its subcellular location is the cytoplasm. The protein localises to the nucleus. It is found in the apical cell membrane. The enzyme catalyses L-seryl-[protein] + ATP = O-phospho-L-seryl-[protein] + ADP + H(+). It catalyses the reaction L-threonyl-[protein] + ATP = O-phospho-L-threonyl-[protein] + ADP + H(+). Its activity is regulated as follows. Phosphorylated and activated by pdk-1. Functionally, acts downstream of PI3 kinase age-1 and kinase pdk-1 in the daf-2/insulin receptor-like transduction pathway. Essential role in regulating development, stress response, and longevity. Phosphorylates Forkhead-related daf-16 and the longevity-promoting skn-1 transcription factors, which inhibits their entry into the nucleus and antagonizes their function. Promotes the cytoplasmic localization of the transcription factor pqm-1. Plays a role in the intracellular trafficking of proteins such as mig-14 to the cell membrane, and this may be through positively regulating ceramide synthesis. Acts downstream of rict-1 to regulate fat storage, size, development and vitellogenesis. Downstream of age-1 and together with akt-1/2, promotes cell survival during embryonic development. Plays a role in maintaining the gonadal basement membrane through antagonizing akt-1 activity. Does not appear to play a role in immune function. This is Serine/threonine-protein kinase sgk-1 from Caenorhabditis elegans.